Reading from the N-terminus, the 143-residue chain is Larval cuticle protein LCP-17 (143 aa).

Residues 1–16 (MKFLIVLAVAVACASA) form the signal peptide. The region spanning 41–110 (EGHFQFNYET…PQGSHLPTPH (70 aa)) is the Chitin-binding type R&amp;R domain.

Functionally, component of the cuticle of the larva of Bombyx mori. The protein is Larval cuticle protein LCP-17 (LCP17) of Bombyx mori (Silk moth).